The primary structure comprises 915 residues: Translation initiation factor IF-2 (915 aa).

Residues 83–94 show a composition bias toward basic and acidic residues; the sequence is QSRRAVEKEQIL. Disordered stretches follow at residues 83-177, 216-280, and 293-328; these read QSRR…PEPP, EADR…KPAV, and ISGMDDSSGTGSRSKFRKQRKMEREREQEEADLLRE. Low complexity-rich tracts occupy residues 111–129 and 137–164; these read VRAAAQPAPVPVAAGEAPS and APATESAPAVAPAGVPAAEPVSEALSAP. Pro residues predominate over residues 165–177; the sequence is LPEPVPEPVPEPP. The segment covering 293-305 has biased composition (polar residues); it reads ISGMDDSSGTGSR. The span at 314-328 shows a compositional bias: basic and acidic residues; the sequence is MEREREQEEADLLRE. The region spanning 412 to 582 is the tr-type G domain; it reads TRPPVVTIMG…LTEAEMRELK (171 aa). Positions 421–428 are G1; the sequence is GHVDHGKT. 421-428 is a GTP binding site; it reads GHVDHGKT. The tract at residues 446 to 450 is G2; the sequence is GITQH. The G3 stretch occupies residues 468–471; sequence DTPG. GTP contacts are provided by residues 468–472 and 522–525; these read DTPGH and NKMD. The G4 stretch occupies residues 522 to 525; it reads NKMD. The segment at 558–560 is G5; sequence SAK.

This sequence belongs to the TRAFAC class translation factor GTPase superfamily. Classic translation factor GTPase family. IF-2 subfamily.

It is found in the cytoplasm. Functionally, one of the essential components for the initiation of protein synthesis. Protects formylmethionyl-tRNA from spontaneous hydrolysis and promotes its binding to the 30S ribosomal subunits. Also involved in the hydrolysis of GTP during the formation of the 70S ribosomal complex. The protein is Translation initiation factor IF-2 of Chlorobium luteolum (strain DSM 273 / BCRC 81028 / 2530) (Pelodictyon luteolum).